Here is a 194-residue protein sequence, read N- to C-terminus: Holliday junction branch migration complex subunit RuvA (194 aa).

The domain I stretch occupies residues 1-64 (MIGRITGLLL…EDVHLLFGFM (64 aa)). The domain II stretch occupies residues 65-140 (TEQERALFRQ…KIDPVAILSE (76 aa)). The tract at residues 140–143 (EAGA) is flexible linker. A domain III region spans residues 144-194 (AASNVDKDILSALLALGYNGREVNRALEQLSEGVTVSDGIMQSLKFLSKVK).

The protein belongs to the RuvA family. In terms of assembly, homotetramer. Forms an RuvA(8)-RuvB(12)-Holliday junction (HJ) complex. HJ DNA is sandwiched between 2 RuvA tetramers; dsDNA enters through RuvA and exits via RuvB. An RuvB hexamer assembles on each DNA strand where it exits the tetramer. Each RuvB hexamer is contacted by two RuvA subunits (via domain III) on 2 adjacent RuvB subunits; this complex drives branch migration. In the full resolvosome a probable DNA-RuvA(4)-RuvB(12)-RuvC(2) complex forms which resolves the HJ.

Its subcellular location is the cytoplasm. Functionally, the RuvA-RuvB-RuvC complex processes Holliday junction (HJ) DNA during genetic recombination and DNA repair, while the RuvA-RuvB complex plays an important role in the rescue of blocked DNA replication forks via replication fork reversal (RFR). RuvA specifically binds to HJ cruciform DNA, conferring on it an open structure. The RuvB hexamer acts as an ATP-dependent pump, pulling dsDNA into and through the RuvAB complex. HJ branch migration allows RuvC to scan DNA until it finds its consensus sequence, where it cleaves and resolves the cruciform DNA. The protein is Holliday junction branch migration complex subunit RuvA of Nitrosomonas eutropha (strain DSM 101675 / C91 / Nm57).